A 369-amino-acid polypeptide reads, in one-letter code: MSLTRVSVTAVRNLHPVTLSPSPRINILYGDNGSGKTSVLEAIHLLGLARSFRSARLQPVIQYEEAACTVFGQVMLANGIASNLGISRERQGEFTIRIDGQNARSAAQLAETLPLQLINPDSFRLLEGAPKIRRQFLDWGVFHVEPRFLPVWQRLQKALRQRNSWLRHGKLDPASQAAWDRELSLASDEIDAYRRSYIQALKPVFEETLAELVSLDDLTLSYYRGWDKDRDLLEVLASSLLRDQQMGHTQAGPQRADLRIRLSGHNAAEILSRGQQKLVVCALRIAQGHLINRAKRGQCVYLVDDLPSELDEQHRMALCRLLEDLGCQVFITCVDPQLLKDGWRTDTPVSMFHVEHGKVSQTTTIGSEA.

Residue 30–37 participates in ATP binding; sequence GDNGSGKT.

This sequence belongs to the RecF family.

It localises to the cytoplasm. In terms of biological role, the RecF protein is involved in DNA metabolism; it is required for DNA replication and normal SOS inducibility. RecF binds preferentially to single-stranded, linear DNA. It also seems to bind ATP. The protein is DNA replication and repair protein RecF of Pseudomonas aeruginosa (strain LESB58).